The chain runs to 158 residues: N-acetylgalactosamine-specific phosphotransferase enzyme IIB component 1 (158 aa).

The region spanning 1–158 is the PTS EIIB type-4 domain; the sequence is MTSPNILLTR…PGDQKEQIPD (158 aa). The Pros-phosphohistidine intermediate role is filled by histidine 17.

The protein resides in the cytoplasm. Its function is as follows. The phosphoenolpyruvate-dependent sugar phosphotransferase system (sugar PTS), a major carbohydrate active -transport system, catalyzes the phosphorylation of incoming sugar substrates concomitantly with their translocation across the cell membrane. This system is involved in N-acetylgalactosamine transport. In Escherichia coli (strain K12), this protein is N-acetylgalactosamine-specific phosphotransferase enzyme IIB component 1 (agaB).